The sequence spans 33 residues: Large ribosomal subunit protein eL21 (33 aa).

This sequence belongs to the eukaryotic ribosomal protein eL21 family. In terms of assembly, component of the large ribosomal subunit.

It is found in the cytoplasm. The protein resides in the cytosol. Its subcellular location is the endoplasmic reticulum. Its function is as follows. Component of the large ribosomal subunit. The ribosome is a large ribonucleoprotein complex responsible for the synthesis of proteins in the cell. The polypeptide is Large ribosomal subunit protein eL21 (rpl21) (Xenopus laevis (African clawed frog)).